Here is a 350-residue protein sequence, read N- to C-terminus: Heat-inducible transcription repressor HrcA (350 aa).

It belongs to the HrcA family.

Negative regulator of class I heat shock genes (grpE-dnaK-dnaJ and groELS operons). Prevents heat-shock induction of these operons. The protein is Heat-inducible transcription repressor HrcA of Limosilactobacillus reuteri (strain DSM 20016) (Lactobacillus reuteri).